A 361-amino-acid polypeptide reads, in one-letter code: 3-dehydroquinate synthase (361 aa).

NAD(+)-binding positions include 72–77 (SGEKEK), 130–131 (TT), lysine 142, and lysine 151. Zn(2+)-binding residues include glutamate 184, histidine 247, and histidine 264.

This sequence belongs to the sugar phosphate cyclases superfamily. Dehydroquinate synthase family. NAD(+) serves as cofactor. It depends on Co(2+) as a cofactor. The cofactor is Zn(2+).

Its subcellular location is the cytoplasm. It carries out the reaction 7-phospho-2-dehydro-3-deoxy-D-arabino-heptonate = 3-dehydroquinate + phosphate. It functions in the pathway metabolic intermediate biosynthesis; chorismate biosynthesis; chorismate from D-erythrose 4-phosphate and phosphoenolpyruvate: step 2/7. Catalyzes the conversion of 3-deoxy-D-arabino-heptulosonate 7-phosphate (DAHP) to dehydroquinate (DHQ). The polypeptide is 3-dehydroquinate synthase (Bacillus cereus (strain ATCC 14579 / DSM 31 / CCUG 7414 / JCM 2152 / NBRC 15305 / NCIMB 9373 / NCTC 2599 / NRRL B-3711)).